The chain runs to 220 residues: NADH-quinone oxidoreductase subunit I (220 aa).

2 4Fe-4S ferredoxin-type domains span residues 71–102 and 112–141; these read LQRL…IITH and DSYT…MGNR. [4Fe-4S] cluster-binding residues include Cys82, Cys85, Cys88, Cys92, Cys121, Cys124, Cys127, and Cys131. The tract at residues 187-220 is disordered; that stretch reads MQATPLDYVQEPSKEESKEETPTNPESNKGDENV. Positions 198–207 are enriched in basic and acidic residues; that stretch reads PSKEESKEET.

It belongs to the complex I 23 kDa subunit family. NDH-1 is composed of 14 different subunits. Subunits NuoA, H, J, K, L, M, N constitute the membrane sector of the complex. [4Fe-4S] cluster is required as a cofactor.

It localises to the cell inner membrane. It carries out the reaction a quinone + NADH + 5 H(+)(in) = a quinol + NAD(+) + 4 H(+)(out). Functionally, NDH-1 shuttles electrons from NADH, via FMN and iron-sulfur (Fe-S) centers, to quinones in the respiratory chain. The immediate electron acceptor for the enzyme in this species is believed to be ubiquinone. Couples the redox reaction to proton translocation (for every two electrons transferred, four hydrogen ions are translocated across the cytoplasmic membrane), and thus conserves the redox energy in a proton gradient. The polypeptide is NADH-quinone oxidoreductase subunit I (Helicobacter pylori (strain HPAG1)).